We begin with the raw amino-acid sequence, 498 residues long: Elastase (498 aa).

The first 23 residues, 1 to 23 (MKKVSTLDLLFVAIMGVSPAAFA), serve as a signal peptide directing secretion. Positions 24–197 (ADLIDVSKLP…VLDQWEGLAH (174 aa)) are excised as a propeptide. The cysteines at positions 227 and 255 are disulfide-linked. The residue at position 236 (Thr-236) is a Phosphothreonine. Asp-333 is a binding site for Ca(2+). Residue His-337 participates in Zn(2+) binding. Glu-338 is an active-site residue. Zn(2+)-binding residues include His-341 and Glu-361. Residues Glu-369, Glu-372, Asp-380, and Leu-382 each coordinate Ca(2+). His-420 (proton donor) is an active-site residue. A disulfide bridge connects residues Cys-467 and Cys-494.

This sequence belongs to the peptidase M4 family. The cofactor is Ca(2+). Zn(2+) is required as a cofactor. Post-translationally, made as a pre-pro-protein which is exported to the periplasm. Probably autocatalyzes cleavage of its pro-peptide. The pro-peptide can be secreted with mature elastase.

The protein localises to the secreted. It carries out the reaction Hydrolysis of proteins including elastin, collagen types III and IV, fibronectin and immunoglobulin A, generally with bulky hydrophobic group at P1'. Insulin B chain cleavage pattern identical to that of thermolysin, but specificity differs in other respects.. Functionally, cleaves host elastase, collagen, IgI and several complement components as well as endogenous pro-aminopeptidase, pro-chitin-binding protein (cbpD). Cleaves its own pro-peptide. Involved in the pathogenesis of P.aeruginosa infections. In Pseudomonas aeruginosa (strain UCBPP-PA14), this protein is Elastase (lasB).